Here is a 145-residue protein sequence, read N- to C-terminus: uncharacterized protein (145 aa).

The disordered stretch occupies residues 95–119 (YVDSTSRTPSAKKDMQGLSVSEKQT).

This is an uncharacterized protein from Treponema pallidum (strain Nichols).